We begin with the raw amino-acid sequence, 504 residues long: Catalase (504 aa).

Positions 1–25 (MSKQDGKLTGLFGAPVSDRENSMTA) are disordered. Residues histidine 56 and asparagine 129 contribute to the active site. Tyrosine 339 serves as a coordination point for heme.

The protein belongs to the catalase family. In terms of assembly, homodimer. Heme is required as a cofactor.

The catalysed reaction is 2 H2O2 = O2 + 2 H2O. Functionally, decomposes hydrogen peroxide into water and oxygen; serves to protect cells from the toxic effects of hydrogen peroxide. In Staphylococcus epidermidis (strain ATCC 35984 / DSM 28319 / BCRC 17069 / CCUG 31568 / BM 3577 / RP62A), this protein is Catalase (katA).